Here is an 847-residue protein sequence, read N- to C-terminus: Receptor-like protein 12 (847 aa).

Residues 1-27 (MMIRSHRHWVFSSRIIIFLSLLVHSLA) form the signal peptide. At 28 to 798 (SSSPHFCRDD…LSEAEENMFN (771 aa)) the chain is on the extracellular side. Residues Asn-52, Asn-66, Asn-103, and Asn-132 are each glycosylated (N-linked (GlcNAc...) asparagine). 25 LRR repeats span residues 109-133 (LQYLRHLDLTNCNLYGEIPSSLGNL), 135-157 (HLTLVNLYFNKFVGEIPASIGNL), 158-181 (NQLRHLILANNVLTGEIPSSLGNL), 183-205 (RLVNLELFSNRLVGKIPDSIGDL), 206-229 (KQLRNLSLASNNLIGEIPSSLGNL), 231-253 (NLVHLVLTHNQLVGEVPASIGNL), 254-277 (IELRVMSFENNSLSGNIPISFANL), 279-301 (KLSIFVLSSNNFTSTFPFDMSIF), 302-325 (HNLEYFDVSYNSFSGPFPKSLLLI), 326-350 (PSLESIYLQENQFTGPIEFANTSSS), 351-374 (TKLQDLILGRNRLHGPIPESISRL), 375-398 (LNLEELDISHNNFTGAIPPTISKL), 400-422 (NLLHLDLSKNNLEGEVPACLWRL), 424-442 (TMVLSHNSFSSFENTSQEE), 443-466 (ALIEELDLNSNSFQGPIPYMICKL), 467-491 (SSLGFLDLSNNLFSGSIPSCIRNFS), 492-514 (GSIKELNLGDNNFSGTLPDIFSK), 516-539 (TELVSLDVSHNQLEGKFPKSLINC), 541-562 (ALELVNVESNKIKDIFPSWLES), 563-587 (LPSLHVLNLRSNKFYGPLYHRHASI), 589-613 (FQSLRIIDISHNNFSGTLPPYYFSN), 657-681 (RRDFRAIDFSGNKINGNIPESLGYL), 682-704 (KELRVLNLSGNAFTSVIPRFLAN), 705-729 (LTKLETLDISRNKLSGQIPQDLAAL), and 731-754 (FLSYMNFSHNLLQGPVPRGTQFQR). N-linked (GlcNAc...) asparagine glycosylation occurs at Asn-180. N-linked (GlcNAc...) asparagine glycosylation is found at Asn-210 and Asn-228. N-linked (GlcNAc...) asparagine glycosylation is found at Asn-263, Asn-276, and Asn-289. Asn-346 is a glycosylation site (N-linked (GlcNAc...) asparagine). The N-linked (GlcNAc...) asparagine glycan is linked to Asn-386. Asn-437 is a glycosylation site (N-linked (GlcNAc...) asparagine). N-linked (GlcNAc...) asparagine glycans are attached at residues Asn-489 and Asn-503. Residue Asn-601 is glycosylated (N-linked (GlcNAc...) asparagine). N-linked (GlcNAc...) asparagine glycosylation is found at Asn-688 and Asn-704. Asn-736 carries N-linked (GlcNAc...) asparagine glycosylation. The chain crosses the membrane as a helical span at residues 799–819 (WVAAAIAYGPGVLCGLVIGHF). The Cytoplasmic portion of the chain corresponds to 820–847 (YTSHNHEWFTEKFGRKQHKALTSVKCSL).

This sequence belongs to the RLP family.

The protein localises to the cell membrane. Functionally, involved in the perception of CLV3 and CLV3-like peptides, that act as extracellular signals regulating meristems maintenance. This chain is Receptor-like protein 12, found in Arabidopsis thaliana (Mouse-ear cress).